Reading from the N-terminus, the 268-residue chain is Tropinone reductase homolog At2g29370 (268 aa).

Residue 22–46 (LVTGGSKGLGKAVVEELAMLGARVH) coordinates NADP(+). Ser155 contacts substrate. Tyr168 (proton acceptor) is an active-site residue.

The protein belongs to the short-chain dehydrogenases/reductases (SDR) family. SDR65C subfamily.

The sequence is that of Tropinone reductase homolog At2g29370 from Arabidopsis thaliana (Mouse-ear cress).